Reading from the N-terminus, the 270-residue chain is Thiosulfate dehydrogenase (270 aa).

The N-terminal stretch at 1–27 (MRGDVRVHTASPIAAAWLLAVGLVAHA) is a signal peptide. 2 Cytochrome c domains span residues 44 to 158 (PDGA…PVGA) and 174 to 260 (PDGV…LTHP). Heme c is bound by residues Cys76, Cys79, His80, Cys187, Cys190, and His191.

In terms of assembly, monomer. Binds 2 heme c groups covalently per subunit.

The protein localises to the periplasm. The catalysed reaction is 2 thiosulfate + 2 Fe(III)-[cytochrome c] = tetrathionate + 2 Fe(II)-[cytochrome c] + 2 H(+). In terms of biological role, catalyzes the oxidation of 2 molecules of thiosulfate to tetrathionate. In Allochromatium vinosum (strain ATCC 17899 / DSM 180 / NBRC 103801 / NCIMB 10441 / D) (Chromatium vinosum), this protein is Thiosulfate dehydrogenase (tsdA).